Consider the following 182-residue polypeptide: Receptor activity-modifying protein 2 (182 aa).

Residues 1-45 form the signal peptide; the sequence is MAPLRVERAPGGSQLAVTSAQRPAALRLPPLLLLLLLLLLGAVST. Residues 46–150 are Extracellular-facing; that stretch reads SPESLNQSHP…VQPTFSDPPE (105 aa). N51, N92, and N137 each carry an N-linked (GlcNAc...) asparagine glycan. Intrachain disulfides connect C76/C106 and C91/C138. A helical transmembrane segment spans residues 151-172; it reads DVLLAMIIAPICLIPFLVTLVV. The Cytoplasmic segment spans residues 173 to 182; that stretch reads WRSKDGDAQA.

This sequence belongs to the RAMP family. As to quaternary structure, heterodimer of CALCRL and RAMP2; the interaction forms the receptor complex for adrenomedullin/ADM. Heterodimer of CALCR and RAMP2; interaction forms the AMYR2 receptor complex for calcitonin/CALC and amylin/IAPP.

Its subcellular location is the cell membrane. Functionally, accessory protein that interacts with and modulates the function of G-protein coupled receptors including calcitonin gene-related peptide type 1 receptor (CALCRL) and calcitonin receptor (CALCR). Required for the transport of CALCRL to the plasma membrane. Together with CALCRL, form a receptor complex for adrenomedullin/ADM. Together with CALCR, act as a receptor complex for calcitonin/CT/CALC. Together with CALCR, also act as a receptor complex for amylin/IAPP. The polypeptide is Receptor activity-modifying protein 2 (Rattus norvegicus (Rat)).